The primary structure comprises 81 residues: Sec-independent protein translocase protein TatA (81 aa).

The helical transmembrane segment at 1–21 (MGMPSGQELLIILAIVVLLFG) threads the bilayer. Positions 45–81 (NEDDDTEVKSASTEAPKKVESAEEVASKESSKTPTQA) are disordered. Positions 59-75 (APKKVESAEEVASKESS) are enriched in basic and acidic residues.

Belongs to the TatA/E family. As to quaternary structure, the Tat system comprises two distinct complexes: a TatABC complex, containing multiple copies of TatA, TatB and TatC subunits, and a separate TatA complex, containing only TatA subunits. Substrates initially bind to the TatABC complex, which probably triggers association of the separate TatA complex to form the active translocon.

The protein localises to the cell inner membrane. Functionally, part of the twin-arginine translocation (Tat) system that transports large folded proteins containing a characteristic twin-arginine motif in their signal peptide across membranes. TatA could form the protein-conducting channel of the Tat system. The chain is Sec-independent protein translocase protein TatA from Sulfurimonas denitrificans (strain ATCC 33889 / DSM 1251) (Thiomicrospira denitrificans (strain ATCC 33889 / DSM 1251)).